Consider the following 393-residue polypeptide: Calreticulin (393 aa).

The first 16 residues, 1–16 (MLSILLTLLLSKYALG), serve as a signal peptide directing secretion. Residue N27 is glycosylated (N-linked (GlcNAc...) asparagine). Cysteines 103 and 135 form a disulfide. An alpha-D-glucoside contacts are provided by Y107, K109, Y126, and D133. A run of 7 repeats spans residues 189 to 200 (VEEGSLEDDWDM), 208 to 219 (DPNDKKPDDWVD), 225 to 236 (DPDDKKPDNWDQ), 242 to 253 (DMDAKKPDDWDD), 257 to 267 (GEWERPQKDNP), 271 to 281 (GEWTPRRIDNP), and 285 to 295 (GEWKPVQIDNP). Positions 189 to 253 (VEEGSLEDDW…DAKKPDDWDD (65 aa)) are 4 X 12 AA approximate repeats. A disordered region spans residues 194 to 277 (LEDDWDMLPP…EYKGEWTPRR (84 aa)). Over residues 202-216 (PPKKIDDPNDKKPDD) the composition is skewed to basic and acidic residues. A compositionally biased stretch (acidic residues) spans 217–226 (WVDEQFIDDP). Basic and acidic residues-rich tracts occupy residues 227-249 (DDKK…KKPD) and 258-277 (EWER…TPRR). Positions 257-295 (GEWERPQKDNPEYKGEWTPRRIDNPKYKGEWKPVQIDNP) are 3 X 11 AA approximate repeats. Residue D315 coordinates an alpha-D-glucoside. The segment at 351–393 (AEVAKEQSSAKDDKEEAEETKERKELPYDAKASDEPSGDHDEL) is disordered. The Prevents secretion from ER motif lies at 390–393 (HDEL).

This sequence belongs to the calreticulin family.

Its subcellular location is the endoplasmic reticulum lumen. Its function is as follows. Molecular calcium-binding chaperone promoting folding, oligomeric assembly and quality control in the ER via the calreticulin/calnexin cycle. This lectin may interact transiently with almost all of the monoglucosylated glycoproteins that are synthesized in the ER. The protein is Calreticulin of Schistosoma mansoni (Blood fluke).